A 354-amino-acid polypeptide reads, in one-letter code: DNA repair protein rhp57 (354 aa).

100–107 (GESGSGKS) lines the ATP pocket.

It belongs to the RecA family.

It is found in the nucleus. Involved in recombination DNA repair and in the repair of gamma-ray-induced damage. In Schizosaccharomyces pombe (strain 972 / ATCC 24843) (Fission yeast), this protein is DNA repair protein rhp57 (rhp57).